Here is a 522-residue protein sequence, read N- to C-terminus: Maturase K (522 aa).

The protein belongs to the intron maturase 2 family. MatK subfamily.

The protein localises to the plastid. It localises to the chloroplast. Usually encoded in the trnK tRNA gene intron. Probably assists in splicing its own and other chloroplast group II introns. In Watsonia angusta, this protein is Maturase K.